Reading from the N-terminus, the 342-residue chain is Phosphate acyltransferase (342 aa).

This sequence belongs to the PlsX family. In terms of assembly, homodimer. Probably interacts with PlsY.

It localises to the cytoplasm. The enzyme catalyses a fatty acyl-[ACP] + phosphate = an acyl phosphate + holo-[ACP]. The protein operates within lipid metabolism; phospholipid metabolism. Catalyzes the reversible formation of acyl-phosphate (acyl-PO(4)) from acyl-[acyl-carrier-protein] (acyl-ACP). This enzyme utilizes acyl-ACP as fatty acyl donor, but not acyl-CoA. The chain is Phosphate acyltransferase from Actinobacillus succinogenes (strain ATCC 55618 / DSM 22257 / CCUG 43843 / 130Z).